Consider the following 232-residue polypeptide: Ribosomal RNA small subunit methyltransferase G (232 aa).

S-adenosyl-L-methionine-binding positions include Gly93, Leu98, 144–145 (VE), and Arg163.

This sequence belongs to the methyltransferase superfamily. RNA methyltransferase RsmG family.

It is found in the cytoplasm. It catalyses the reaction guanosine(527) in 16S rRNA + S-adenosyl-L-methionine = N(7)-methylguanosine(527) in 16S rRNA + S-adenosyl-L-homocysteine. Its function is as follows. Specifically methylates the N7 position of guanine in position 527 of 16S rRNA. This chain is Ribosomal RNA small subunit methyltransferase G, found in Burkholderia pseudomallei (strain 1106a).